The sequence spans 207 residues: Ribosome maturation factor RimP (207 aa).

The tract at residues 171-207 is disordered; the sequence is RAPGGAPEEGEEDTTEAAPEGAGKSPKPGRRPARKTH. Basic residues predominate over residues 197-207; that stretch reads KPGRRPARKTH.

It belongs to the RimP family.

The protein localises to the cytoplasm. Its function is as follows. Required for maturation of 30S ribosomal subunits. The sequence is that of Ribosome maturation factor RimP from Gluconacetobacter diazotrophicus (strain ATCC 49037 / DSM 5601 / CCUG 37298 / CIP 103539 / LMG 7603 / PAl5).